Reading from the N-terminus, the 101-residue chain is Urease subunit beta (101 aa).

It belongs to the urease beta subunit family. As to quaternary structure, heterotrimer of UreA (gamma), UreB (beta) and UreC (alpha) subunits. Three heterotrimers associate to form the active enzyme.

It is found in the cytoplasm. It catalyses the reaction urea + 2 H2O + H(+) = hydrogencarbonate + 2 NH4(+). Its pathway is nitrogen metabolism; urea degradation; CO(2) and NH(3) from urea (urease route): step 1/1. The protein is Urease subunit beta of Burkholderia vietnamiensis (strain G4 / LMG 22486) (Burkholderia cepacia (strain R1808)).